A 125-amino-acid polypeptide reads, in one-letter code: uncharacterized protein (125 aa).

It belongs to the anhydro-N-acetylmuramic acid kinase family.

This is an uncharacterized protein from Yersinia enterocolitica.